The chain runs to 479 residues: MANFTPVNGSSGNQSVRLVTSSSHNRYETVEMVFIATVTGSLSLVTVVGNILVMLSIKVNRQLQTVNNYFLFSLACADLIIGAFSMNLYTVYIIKGYWPLGAVVCDLWLALDYVVSNASVMNLLIISFDRYFCVTKPLTYPARRTTKMAGLMIAAAWVLSFVLWAPAILFWQFVVGKRTVPDNQCFIQFLSNPAVTFGTAIAAFYLPVVIMTVLYIHISLASRSRVHKHRPEGPKEKKAKTLAFLKSPLMKQSVKKPPPGEAAREELRNGKLEEAPPPALPPPPRPVADKDTSNESSSGSATQNTKERPATELSTTEATTPAMPAPPLQPRALNPASRWSKIQIVTKQTGNECVTAIEIVPATPAGMRPAANVARKFASIARNQVRKKRQMAARERKVTRTIFAILLAFILTWTPYNVMVLVNTFCQSCIPDTVWSIGYWLCYVNSTINPACYALCNATFKKTFRHLLLCQYRNIGTAR.

Topologically, residues 1–31 (MANFTPVNGSSGNQSVRLVTSSSHNRYETVE) are extracellular. Asn-8 and Asn-13 each carry an N-linked (GlcNAc...) asparagine glycan. A helical transmembrane segment spans residues 32–54 (MVFIATVTGSLSLVTVVGNILVM). The Cytoplasmic portion of the chain corresponds to 55–68 (LSIKVNRQLQTVNN). Residues 69 to 89 (YFLFSLACADLIIGAFSMNLY) traverse the membrane as a helical segment. Residues 90-106 (TVYIIKGYWPLGAVVCD) are Extracellular-facing. Cys-105 and Cys-185 are oxidised to a cystine. Residues 107–128 (LWLALDYVVSNASVMNLLIISF) traverse the membrane as a helical segment. Residues 129–148 (DRYFCVTKPLTYPARRTTKM) lie on the Cytoplasmic side of the membrane. A helical transmembrane segment spans residues 149–171 (AGLMIAAAWVLSFVLWAPAILFW). Over 172 to 193 (QFVVGKRTVPDNQCFIQFLSNP) the chain is Extracellular. The chain crosses the membrane as a helical span at residues 194–216 (AVTFGTAIAAFYLPVVIMTVLYI). Residues 217 to 401 (HISLASRSRV…AARERKVTRT (185 aa)) are Cytoplasmic-facing. The interval 271-333 (KLEEAPPPAL…PAPPLQPRAL (63 aa)) is disordered. The segment covering 275–286 (APPPALPPPPRP) has biased composition (pro residues). The span at 294-304 (NESSSGSATQN) shows a compositional bias: polar residues. A helical membrane pass occupies residues 402-422 (IFAILLAFILTWTPYNVMVLV). Residues 423–436 (NTFCQSCIPDTVWS) are Extracellular-facing. Residues 437 to 456 (IGYWLCYVNSTINPACYALC) form a helical membrane-spanning segment. The Cytoplasmic portion of the chain corresponds to 457-479 (NATFKKTFRHLLLCQYRNIGTAR). 3 positions are modified to phosphothreonine: Thr-459, Thr-463, and Thr-477.

This sequence belongs to the G-protein coupled receptor 1 family. Muscarinic acetylcholine receptor subfamily. CHRM4 sub-subfamily.

Its subcellular location is the cell membrane. It localises to the postsynaptic cell membrane. The muscarinic acetylcholine receptor mediates various cellular responses, including inhibition of adenylate cyclase, breakdown of phosphoinositides and modulation of potassium channels through the action of G proteins. Primary transducing effect is inhibition of adenylate cyclase. In Homo sapiens (Human), this protein is Muscarinic acetylcholine receptor M4 (CHRM4).